The chain runs to 505 residues: AMP phosphorylase (505 aa).

AMP is bound by residues glycine 169, 195 to 200 (SRAITG), and threonine 204. Aspartate 257 functions as the Proton donor in the catalytic mechanism. Positions 265 and 289 each coordinate AMP.

The protein belongs to the thymidine/pyrimidine-nucleoside phosphorylase family. Type 2 subfamily.

The enzyme catalyses AMP + phosphate = alpha-D-ribose 1,5-bisphosphate + adenine. It catalyses the reaction CMP + phosphate = cytosine + alpha-D-ribose 1,5-bisphosphate. The catalysed reaction is UMP + phosphate = alpha-D-ribose 1,5-bisphosphate + uracil. Functionally, catalyzes the conversion of AMP and phosphate to adenine and ribose 1,5-bisphosphate (R15P). Exhibits phosphorylase activity toward CMP and UMP in addition to AMP. Functions in an archaeal AMP degradation pathway, together with R15P isomerase and RubisCO. The polypeptide is AMP phosphorylase (Methanocorpusculum labreanum (strain ATCC 43576 / DSM 4855 / Z)).